The following is a 441-amino-acid chain: Cysteine--tRNA ligase (441 aa).

A Zn(2+)-binding site is contributed by Cys24. The 'HIGH' region signature appears at 26–36; the sequence is PTVYNYIHIGN. Zn(2+) is bound by residues Cys204, His230, and Glu234. The short motif at 262-266 is the 'KMSKS' region element; that stretch reads KMSKS. Lys265 contributes to the ATP binding site.

It belongs to the class-I aminoacyl-tRNA synthetase family. As to quaternary structure, monomer. Requires Zn(2+) as cofactor.

It localises to the cytoplasm. It carries out the reaction tRNA(Cys) + L-cysteine + ATP = L-cysteinyl-tRNA(Cys) + AMP + diphosphate. The protein is Cysteine--tRNA ligase of Mycoplasma capricolum subsp. capricolum (strain California kid / ATCC 27343 / NCTC 10154).